A 363-amino-acid polypeptide reads, in one-letter code: Cleavage and termination factor 1 (363 aa).

An RRM domain is found at 7–85 (NVVFVGNIPY…RKIRVEFPSN (79 aa)). The disordered stretch occupies residues 291–325 (QPASATSSPPSVPQKIPSSNHKSQQANGSDQGNEG). Over residues 306–322 (IPSSNHKSQQANGSDQG) the composition is skewed to polar residues.

Interacts with res2.

Its subcellular location is the nucleus. Component of the cleavage factor I (CF I) involved in pre-mRNA 3'-end processing. The chain is Cleavage and termination factor 1 (ctf1) from Schizosaccharomyces pombe (strain 972 / ATCC 24843) (Fission yeast).